Reading from the N-terminus, the 207-residue chain is Abscisic acid receptor PYL4 (207 aa).

The START-like stretch occupies residues 45–195; the sequence is HEVGPNQCCS…NLQSLAKIAE (151 aa). A disulfide bridge links Cys-52 with Cys-176. Abscisate-binding positions include Lys-81, 111-116, 138-144, and Glu-160; these read AASSTE and RLSNYRS. A Gate loop motif is present at residues 107 to 111; it reads SGLPA. The Latch loop signature appears at 137–139; the sequence is HRL.

Belongs to the PYR/PYL/RCAR abscisic acid intracellular receptor family. Monomer. Homodimer. Binds ABA on one subunit only. Interacts with HAB1, ABI1 and ABI2, and possibly with other PP2Cs. Binds to CARs protein in an ABA-independent manner, both at the plasma membrane and in the nucleus. Interacts directly with CAR1 and CAR4. Interacts with TOPP1. Interacts with DDA1. Interacts with FREE1 (via N-terminus). Interacts with the E3 ubiquitin-protein ligase RSL1 at the plasma membrane. Ubiquitynated and degraded by the proteasome upon binding to the E3 ubiquitin-protein ligase RSL1 at the plasma membrane.

The protein localises to the cytoplasm. Its subcellular location is the nucleus. It localises to the cell membrane. It is found in the vacuole. Functionally, receptor for abscisic acid (ABA) required for ABA-mediated responses such as stomatal closure and germination inhibition. Inhibits the activity of group-A protein phosphatases type 2C (PP2Cs) when activated by ABA. Can be activated by both (-)-ABA and (+)-ABA. In Arabidopsis thaliana (Mouse-ear cress), this protein is Abscisic acid receptor PYL4.